Consider the following 398-residue polypeptide: Glycosyltransferase GlyF (398 aa).

The tract at residues 1–259 (MRKSIVLAAD…SEIAFQRSDL (259 aa)) is GT8 domain. UDP-binding positions include 8–13 (AADNAY) and 101–102 (DS). 3 residues coordinate Mn(2+): Asp-101, Asp-103, and His-221. Residue 221–227 (HYASHDK) coordinates UDP.

In the N-terminal section; belongs to the glycosyltransferase 8 family.

In terms of biological role, may be involved in the polymorphic O-glycosylation of the serine-rich repeat protein PsrP. Has hydrolytic activity against UDP-galactose and to a lesser extent against UDP-glucose; no glycosyltransferase activity has been seen with tested substrates. The protein is Glycosyltransferase GlyF of Streptococcus pneumoniae serotype 4 (strain ATCC BAA-334 / TIGR4).